Reading from the N-terminus, the 116-residue chain is U30-theraphotoxin-Cg1b (116 aa).

The first 17 residues, 1–17 (MKLCVLTIATLLVTATS), serve as a signal peptide directing secretion. Positions 18–53 (LETQKEIAEGNELTREETPSLVEHKEDEAAAASEKR) are excised as a propeptide. A disordered region spans residues 25–45 (AEGNELTREETPSLVEHKEDE). Cystine bridges form between C55–C69, C62–C75, C66–C112, and C68–C88.

This sequence belongs to the neurotoxin 03 (Tx2) family. 02 subfamily. As to expression, expressed by the venom gland.

It localises to the secreted. Functionally, probable ion channel inhibitor. The protein is U30-theraphotoxin-Cg1b of Chilobrachys guangxiensis (Chinese earth tiger tarantula).